The chain runs to 1453 residues: Collagen alpha-1(I) chain (1453 aa).

Positions 1–22 (MFSFVDSRLLLLIAATVLLTRG) are cleaved as a signal peptide. A propeptide spans 23–151 (EGEEDIQTGS…PPGLGGNFAP (129 aa)) (N-terminal propeptide). Positions 31 to 89 (GSCVQDGLTYNDKDVWKPEPCQICVCDSGNILCDEVICEDTSDCPNAEIPFGECCPICP) constitute a VWFC domain. Residues 98-1203 (PESAGVEGPK…PQEKAHDGGR (1106 aa)) form a disordered region. A compositionally biased stretch (basic and acidic residues) spans 106-116 (PKGDTGPRGDR). The span at 131–143 (PGLPGPPGPPGPP) shows a compositional bias: pro residues. Glutamine 152 bears the Pyrrolidone carboxylic acid mark. Lysine 160 bears the Allysine mark. Positions 162–176 (AGVAVPGPMGPAGPR) are enriched in low complexity. A 4-hydroxyproline mark is found at proline 179, proline 182, proline 185, proline 194, proline 197, proline 200, proline 215, proline 230, proline 236, proline 245, and proline 251. The span at 187 to 206 (PQGFQGPPGEPGEPGASGPM) shows a compositional bias: low complexity. The residue at position 254 (lysine 254) is a 5-hydroxylysine; alternate. Lysine 254 is a glycosylation site (O-linked (Gal...) hydroxylysine; partial). Positions 265-284 (AKGQPGPAGPKGEPGSPGEN) are enriched in low complexity. 4-hydroxyproline occurs at positions 269, 278, 281, 287, 296, 302, 317, 323, 332, and 335. Positions 307-319 (PAGARGNDGAPGA) are enriched in low complexity. Positions 320–334 (AGPPGPTGPAGPPGF) are enriched in pro residues. Positions 350–361 (RGSEGPQGSRGE) are enriched in low complexity. Proline 362, proline 365, proline 377, proline 383, proline 392, proline 398, proline 401, and proline 416 each carry 4-hydroxyproline. Residues 368–418 (AGAAGPAGNPGADGQPGAKGATGAPGIAGAPGFPGARGPSGPQGPSGAPGP) are compositionally biased toward low complexity. At lysine 419 the chain carries 5-hydroxylysine. 4-hydroxyproline is present on residues proline 425, proline 428, proline 440, proline 449, proline 464, proline 470, proline 479, and proline 485. The segment covering 463-482 (EPGPAGLPGPAGERGAPGSR) has biased composition (low complexity). At lysine 494 the chain carries 5-hydroxylysine. Residues proline 497, proline 503, proline 512, proline 518, proline 524, proline 533, proline 536, proline 545, proline 554, proline 560, proline 572, proline 581, proline 584, proline 590, proline 593, proline 611, proline 629, proline 635, proline 641, proline 647, proline 653, proline 659, proline 671, proline 680, proline 692, proline 704, proline 707, proline 713, proline 719, proline 728, and proline 737 each carry the 4-hydroxyproline modification. A compositionally biased stretch (low complexity) spans 527–581 (KGLTGSPGSPGPDGKTGPPGPAGQDGRPGPAGPPGARGQAGVMGFPGPKGAAGEP). The span at 623 to 664 (QGPAGAPGFQGLPGPAGPPGEAGKPGEQGVPGNAGAPGPAGA) shows a compositional bias: low complexity. Residues 685 to 722 (PRGANGAPGNDGAKGDAGAPGAPGNEGPPGLEGMPGER) are compositionally biased toward low complexity. The residue at position 740 (lysine 740) is a 5-hydroxylysine. Proline 746, proline 761, proline 767, proline 776, proline 788, proline 794, proline 797, proline 806, proline 812, proline 830, proline 839, and proline 848 each carry 4-hydroxyproline. The span at 800 to 827 (AGFAGPPGADGQPGAKGETGDAGAKGDA) shows a compositional bias: low complexity. The span at 835–883 (PTGAPGPAGZVGAPGPKGARGSAGPPGATGFPGAAGRVGPPGPSGNIGL) shows a compositional bias: low complexity. Position 851 is a 5-hydroxylysine (lysine 851). 2 positions are modified to 4-hydroxyproline: proline 860 and proline 866. Proline 874 is modified (3-hydroxyproline). 4-hydroxyproline is present on residues proline 875, proline 884, proline 887, proline 908, proline 911, proline 917, proline 920, proline 926, proline 935, proline 953, proline 962, proline 965, proline 971, proline 986, proline 992, proline 998, proline 1007, and proline 1013. Low complexity predominate over residues 890–908 (AGKZGSKGPRGETGPAGRP). A compositionally biased stretch (pro residues) spans 910–920 (EPGPAGPPGPP). Residues 985 to 995 (PPGPMGPPGLA) show a composition bias toward pro residues. Positions 997–1021 (PPGEAGREGAPGAEGAPGRDGAAGP) are enriched in low complexity. A 5-hydroxylysine; partial modification is found at lysine 1022. Over residues 1031 to 1046 (AGPPGAPGAPGAPGPV) the composition is skewed to pro residues. A 4-hydroxyproline mark is found at proline 1034, proline 1037, proline 1040, and proline 1067. The span at 1070–1081 (AGARGPAGPQGP) shows a compositional bias: low complexity. Basic and acidic residues predominate over residues 1082–1096 (RGDKGETGEQGDRGM). Lysine 1085 carries the post-translational modification 5-hydroxylysine; partial. Position 1097 is a 5-hydroxylysine; alternate (lysine 1097). An O-linked (Gal...) hydroxylysine; partial glycan is attached at lysine 1097. Proline 1109, proline 1112, proline 1115, proline 1133, and proline 1148 each carry 4-hydroxyproline. Residues 1115–1139 (PGEQGPSGASGPAGPRGPPGSAGAA) show a composition bias toward low complexity. Proline 1153 carries the 3-hydroxyproline modification. Proline 1154 carries the 4-hydroxyproline modification. The span at 1166-1181 (VGPPGPPGPPGPPGPP) shows a compositional bias: pro residues. Residue proline 1168 is modified to 3-hydroxyproline. At proline 1169 the chain carries 4-hydroxyproline. Proline 1171 is modified (3-hydroxyproline). Proline 1172 bears the 4-hydroxyproline mark. 3-hydroxyproline is present on proline 1174. Residues proline 1175, proline 1178, and proline 1181 each carry the 4-hydroxyproline modification. The residue at position 1197 (lysine 1197) is an Allysine. The propeptide at 1208-1453 (DDANVMRDRD…GIDIGPVCFL (246 aa)) is C-terminal propeptide. The Fibrillar collagen NC1 domain maps to 1218–1453 (LEVDTTLKSL…GIDIGPVCFL (236 aa)). 3 cysteine pairs are disulfide-bonded: cysteine 1248-cysteine 1280, cysteine 1288-cysteine 1451, and cysteine 1359-cysteine 1404. Positions 1266, 1268, 1269, 1271, and 1274 each coordinate Ca(2+). Asparagine 1354 is a glycosylation site (N-linked (GlcNAc...) asparagine).

The protein belongs to the fibrillar collagen family. In terms of assembly, trimers of one alpha 2(I) and two alpha 1(I) chains. Contains mostly 4-hydroxyproline. Proline residues at the third position of the tripeptide repeating unit (G-X-Y) are 4-hydroxylated in some or all of the chains. Post-translationally, contains 3-hydroxyproline. This modification occurs on the first proline residue in the sequence motif Gly-Pro-Hyp, where Hyp is 4-hydroxyproline. In terms of processing, lysine residues at the third position of the tripeptide repeating unit (G-X-Y) are 5-hydroxylated in some or all of the chains. O-glycosylated on hydroxylated lysine residues. The O-linked glycan consists of a Glc-Gal disaccharide. As to expression, forms the fibrils of tendon, ligaments and bones. In bones the fibrils are mineralized with calcium hydroxyapatite.

Its subcellular location is the secreted. It localises to the extracellular space. The protein resides in the extracellular matrix. In terms of biological role, type I collagen is a member of group I collagen (fibrillar forming collagen). This Gallus gallus (Chicken) protein is Collagen alpha-1(I) chain (COL1A1).